We begin with the raw amino-acid sequence, 175 residues long: Disulfide bond formation protein B (175 aa).

Over methionine 1–serine 13 the chain is Cytoplasmic. A helical transmembrane segment spans residues tryptophan 14–tyrosine 30. Topologically, residues phenylalanine 31–leucine 48 are periplasmic. Cysteine 40 and cysteine 43 are disulfide-bonded. The helical transmembrane segment at alanine 49–proline 64 threads the bilayer. At lysine 65–isoleucine 71 the chain is on the cytoplasmic side. A helical transmembrane segment spans residues leucine 72 to leucine 89. The Periplasmic segment spans residues alanine 90–glutamate 144. An intrachain disulfide couples cysteine 104 to cysteine 130. The chain crosses the membrane as a helical span at residues tryptophan 145–proline 163. Residues isoleucine 164–lysine 175 lie on the Cytoplasmic side of the membrane.

It belongs to the DsbB family.

The protein localises to the cell inner membrane. Functionally, required for disulfide bond formation in some periplasmic proteins. Acts by oxidizing the DsbA protein. This is Disulfide bond formation protein B from Shewanella sp. (strain ANA-3).